We begin with the raw amino-acid sequence, 255 residues long: uncharacterized protein (255 aa).

The next 2 membrane-spanning stretches (helical) occupy residues 2-22 (LLPA…YGVL) and 168-188 (VASV…FNLF).

Its subcellular location is the cell membrane. This is an uncharacterized protein from Mycobacterium tuberculosis (strain ATCC 25618 / H37Rv).